The following is a 95-amino-acid chain: Co-chaperonin GroES (95 aa).

Belongs to the GroES chaperonin family. In terms of assembly, heptamer of 7 subunits arranged in a ring. Interacts with the chaperonin GroEL.

The protein resides in the cytoplasm. In terms of biological role, together with the chaperonin GroEL, plays an essential role in assisting protein folding. The GroEL-GroES system forms a nano-cage that allows encapsulation of the non-native substrate proteins and provides a physical environment optimized to promote and accelerate protein folding. GroES binds to the apical surface of the GroEL ring, thereby capping the opening of the GroEL channel. The protein is Co-chaperonin GroES of Nitratidesulfovibrio vulgaris (strain ATCC 29579 / DSM 644 / CCUG 34227 / NCIMB 8303 / VKM B-1760 / Hildenborough) (Desulfovibrio vulgaris).